The following is a 300-amino-acid chain: MPTELTLATRRSALALAQSRAFARSLEAAVPDLSLRELEVVTSGDKTQDRSLQDIGGKGLFIKELEEALLDRRADFAVHSIKDVPAEIAPALCLACIPAREDPRDALVTRSGALLAELPAGARVGTSSLRRAVALREARPDLVIEPVRGNVDTRLRKVFDGVFDAVVLALAGLKRLGLEARATEVLSPEVSLPAIGQGALGIECRTADDSVRDVLGTLADAETTICVSAERAVMAAVEGSCRTPVAAYAVRDGGALWLRALLAEPDGSRLRRAERRLSWPGNTREAERLGADLGAELKKG.

S-(dipyrrolylmethanemethyl)cysteine is present on C241.

It belongs to the HMBS family. In terms of assembly, monomer. It depends on dipyrromethane as a cofactor.

It carries out the reaction 4 porphobilinogen + H2O = hydroxymethylbilane + 4 NH4(+). It functions in the pathway porphyrin-containing compound metabolism; protoporphyrin-IX biosynthesis; coproporphyrinogen-III from 5-aminolevulinate: step 2/4. Tetrapolymerization of the monopyrrole PBG into the hydroxymethylbilane pre-uroporphyrinogen in several discrete steps. The protein is Porphobilinogen deaminase of Sorangium cellulosum (strain So ce56) (Polyangium cellulosum (strain So ce56)).